Reading from the N-terminus, the 307-residue chain is Leucine-rich repeat-containing protein 25 (307 aa).

The first 20 residues, 1–20 (MGGPLMWALLLPLLLHQAGS), serve as a signal peptide directing secretion. At 21-168 (QTSSCSVLSG…SCPSGLTKIA (148 aa)) the chain is on the extracellular side. N44 and N56 each carry an N-linked (GlcNAc...) asparagine glycan. LRR repeat units lie at residues 63-86 (SVQL…RDLE) and 87-110 (QLQL…XXGC). Residues N95, N132, and N151 are each glycosylated (N-linked (GlcNAc...) asparagine). The chain crosses the membrane as a helical span at residues 169-189 (IGALAASGSLLLVLAIAGPVL). At 190-307 (AWRFCRHRMD…DDEEYVVPGR (118 aa)) the chain is on the cytoplasmic side. Residues 205 to 249 (TWASQDGSRSGSGRQPRYSSQGRRPKSPANTPPRSSTPDYENVFV) are disordered. A compositionally biased stretch (low complexity) spans 211-226 (GSRSGSGRQPRYSSQG). Residues 232-243 (PANTPPRSSTPD) show a composition bias toward polar residues. Phosphotyrosine is present on Y286.

In terms of assembly, interacts with RIGI. Interacts with SQSTM1. Interacts with p65/RELA; this interaction promotes the degradation of RELA through autophagy.

The protein resides in the membrane. Its subcellular location is the cytoplasm. Plays a role in the inhibition of RLR-mediated type I interferon signaling pathway by targeting RIGI for autophagic degradation. Interacts specifically with ISG15-associated RIGI to promote interaction between RIGI and the autophagic cargo receptor p62/SQSTM1 to mediate RIGI degradation via selective autophagy. Plays also a role in the inhibition of NF-kappa-B signaling pathway and inflammatory response by promoting the degradation of p65/RELA. The sequence is that of Leucine-rich repeat-containing protein 25 (LRRC25) from Bos taurus (Bovine).